Here is a 614-residue protein sequence, read N- to C-terminus: Zinc metalloproteinase-disintegrin-like VLAIP-B (614 aa).

The signal sequence occupies residues 1-20 (MMQVLLVTICLAVFPYQGSS). A propeptide spanning residues 21–193 (IILESGNVND…KASQLNLTPE (173 aa)) is cleaved from the precursor. The residue at position 194 (Q194) is a Pyrrolidone carboxylic acid. The region spanning 202–398 (KYVELVIVAD…KMPQCILNKP (197 aa)) is the Peptidase M12B domain. E205 lines the Ca(2+) pocket. N262 is a glycosylation site (N-linked (GlcNAc...) asparagine). D289 provides a ligand contact to Ca(2+). 3 disulfide bridges follow: C313–C393, C353–C377, and C355–C360. Zn(2+) is bound at residue H338. Residue E339 is part of the active site. Positions 342 and 348 each coordinate Zn(2+). Positions 393, 396, 408, 411, 413, 415, 418, and 421 each coordinate Ca(2+). Residues 406-492 (PAVCGNYFVE…ECPTDQFQRN (87 aa)) enclose the Disintegrin domain. Intrachain disulfides connect C409/C438, C420/C433, C422/C428, C432/C455, C446/C452, C451/C477, C464/C484, C471/C503, C496/C508, C515/C565, C530/C576, C543/C553, C560/C602, and C596/C607. The D/ECD-tripeptide signature appears at 470–472 (ECD). 3 N-linked (GlcNAc...) asparagine glycosylation sites follow: N505, N547, and N568.

Belongs to the venom metalloproteinase (M12B) family. P-III subfamily. P-IIIc sub-subfamily. As to quaternary structure, heterodimer; disulfide-linked. Requires Zn(2+) as cofactor. In terms of processing, the N-terminus is blocked. Expressed by the venom gland.

Its subcellular location is the secreted. Inhibited by EDTA or 1,10-phenanthroline. Not inhibited by PMSF. Its function is as follows. This metalloproteinase hydrolyzes azocasein, and insulin B-chain (at the '38-Ala-|-Leu-39' bond). Also hydrolyzes the Aalpha-chain (FGA) and more slowly the Bbeta-chain of fibrinogen (FGB), without affecting the gamma-chain. Cleaves alpha-chain of fibrinogen at '432-Lys-|-Leu-433' and '535-Pro-|-Met-536' bonds. Does not cleave fibrin. Inhibits endothelial cell adhesion to extracellular matrix proteins such as fibrinogen, fibronectin, vitronectin, collagen I, and collagen IV. Induces apoptosis in vascular endothelial cells. The protein is Zinc metalloproteinase-disintegrin-like VLAIP-B of Macrovipera lebetinus (Levantine viper).